We begin with the raw amino-acid sequence, 333 residues long: MDERLLSGESAYEDADLEYSLRPQTLRQYIGQDKAKHNLEVFIEAAKMREETLDHVLLYGPPGLGKTTLANIIANEMGVNVRTTSGPAIERPGDLAAVLTSLQPGDVLFIDEIHRLHRSIEEVLYPAMEDFCLDIVIGKGPSARSVRLDLPPFTLVGATTRAGALSAPLRDRFGVLSRLEYYTVDQLSAIVERTGEVFEVEINSLAALEIARRARGTPRIANRLLRRVRDFAQVRGNGTVTMEITQMALELLQVDKLGLDHIDHKLLLGIIEKFRGGPVGLETVSATIGEESHTIEDVYEPYLLQIGFLQRTPRGRIVTPLAYEHFGMEMPKV.

Positions methionine 1–tyrosine 182 are large ATPase domain (RuvB-L). ATP is bound by residues leucine 21, arginine 22, glycine 63, lysine 66, threonine 67, threonine 68, glutamate 129–phenylalanine 131, arginine 172, tyrosine 182, and arginine 219. A Mg(2+)-binding site is contributed by threonine 67. The tract at residues threonine 183–glutamine 253 is small ATPAse domain (RuvB-S). Residues lysine 256–valine 333 form a head domain (RuvB-H) region. Residues arginine 311 and arginine 316 each contribute to the DNA site.

Belongs to the RuvB family. In terms of assembly, homohexamer. Forms an RuvA(8)-RuvB(12)-Holliday junction (HJ) complex. HJ DNA is sandwiched between 2 RuvA tetramers; dsDNA enters through RuvA and exits via RuvB. An RuvB hexamer assembles on each DNA strand where it exits the tetramer. Each RuvB hexamer is contacted by two RuvA subunits (via domain III) on 2 adjacent RuvB subunits; this complex drives branch migration. In the full resolvosome a probable DNA-RuvA(4)-RuvB(12)-RuvC(2) complex forms which resolves the HJ.

Its subcellular location is the cytoplasm. The enzyme catalyses ATP + H2O = ADP + phosphate + H(+). The RuvA-RuvB-RuvC complex processes Holliday junction (HJ) DNA during genetic recombination and DNA repair, while the RuvA-RuvB complex plays an important role in the rescue of blocked DNA replication forks via replication fork reversal (RFR). RuvA specifically binds to HJ cruciform DNA, conferring on it an open structure. The RuvB hexamer acts as an ATP-dependent pump, pulling dsDNA into and through the RuvAB complex. RuvB forms 2 homohexamers on either side of HJ DNA bound by 1 or 2 RuvA tetramers; 4 subunits per hexamer contact DNA at a time. Coordinated motions by a converter formed by DNA-disengaged RuvB subunits stimulates ATP hydrolysis and nucleotide exchange. Immobilization of the converter enables RuvB to convert the ATP-contained energy into a lever motion, pulling 2 nucleotides of DNA out of the RuvA tetramer per ATP hydrolyzed, thus driving DNA branch migration. The RuvB motors rotate together with the DNA substrate, which together with the progressing nucleotide cycle form the mechanistic basis for DNA recombination by continuous HJ branch migration. Branch migration allows RuvC to scan DNA until it finds its consensus sequence, where it cleaves and resolves cruciform DNA. This chain is Holliday junction branch migration complex subunit RuvB, found in Bacillus cereus (strain 03BB102).